The primary structure comprises 152 residues: Large ribosomal subunit protein bL9 (152 aa).

This sequence belongs to the bacterial ribosomal protein bL9 family.

Its function is as follows. Binds to the 23S rRNA. The chain is Large ribosomal subunit protein bL9 from Nostoc sp. (strain PCC 7120 / SAG 25.82 / UTEX 2576).